The following is a 129-amino-acid chain: Fluoride-specific ion channel FluC 2 (129 aa).

4 helical membrane-spanning segments follow: residues 4–24, 39–59, 65–85, and 104–124; these read LDVM…WWIG, TFLI…LFGV, YGTM…TTFS, and VFYL…GAML. Na(+)-binding residues include Gly-79 and Thr-82.

Belongs to the fluoride channel Fluc/FEX (TC 1.A.43) family.

The protein localises to the cell inner membrane. The enzyme catalyses fluoride(in) = fluoride(out). Its activity is regulated as follows. Na(+) is not transported, but it plays an essential structural role and its presence is essential for fluoride channel function. Its function is as follows. Fluoride-specific ion channel. Important for reducing fluoride concentration in the cell, thus reducing its toxicity. This Brucella abortus biovar 1 (strain 9-941) protein is Fluoride-specific ion channel FluC 2.